A 393-amino-acid polypeptide reads, in one-letter code: S-adenosylmethionine synthase (393 aa).

His-17 contacts ATP. A Mg(2+)-binding site is contributed by Asp-19. Glu-45 is a binding site for K(+). Glu-58 and Gln-106 together coordinate L-methionine. The segment at 106 to 116 (QSAHIAQGVNA) is flexible loop. ATP-binding positions include 171–173 (DAK), 237–238 (KF), Asp-246, 252–253 (RK), Ala-269, and Lys-273. Residue Asp-246 coordinates L-methionine. Lys-277 is an L-methionine binding site.

It belongs to the AdoMet synthase family. Homotetramer; dimer of dimers. The cofactor is Mg(2+). Requires K(+) as cofactor.

It is found in the cytoplasm. The enzyme catalyses L-methionine + ATP + H2O = S-adenosyl-L-methionine + phosphate + diphosphate. The protein operates within amino-acid biosynthesis; S-adenosyl-L-methionine biosynthesis; S-adenosyl-L-methionine from L-methionine: step 1/1. Catalyzes the formation of S-adenosylmethionine (AdoMet) from methionine and ATP. The overall synthetic reaction is composed of two sequential steps, AdoMet formation and the subsequent tripolyphosphate hydrolysis which occurs prior to release of AdoMet from the enzyme. The chain is S-adenosylmethionine synthase from Ruegeria pomeroyi (strain ATCC 700808 / DSM 15171 / DSS-3) (Silicibacter pomeroyi).